Here is a 288-residue protein sequence, read N- to C-terminus: 33 kDa chaperonin (288 aa).

Disulfide bonds link Cys-236–Cys-238 and Cys-269–Cys-272.

Belongs to the HSP33 family. In terms of processing, under oxidizing conditions two disulfide bonds are formed involving the reactive cysteines. Under reducing conditions zinc is bound to the reactive cysteines and the protein is inactive.

It localises to the cytoplasm. Its function is as follows. Redox regulated molecular chaperone. Protects both thermally unfolding and oxidatively damaged proteins from irreversible aggregation. Plays an important role in the bacterial defense system toward oxidative stress. This chain is 33 kDa chaperonin, found in Lactococcus lactis subsp. cremoris (strain SK11).